The primary structure comprises 930 residues: MNSVRAANRRPRRVSRPRPVQQQQQQPPQQPPPQPPQQQPPPQPPQQPPQQQPPPPPQQQPPPPPPPPPPPPQDRNNAGERDDVPADMVAEESGPGAQNSPYQLRRKTLLPKRTACPTKSSMEGASTSTTENFGHRAKRARVSGKSQDLSAAPAEQYLQEKLPDEVVLKIFSYLLEQDLCRAACVCKRFSELANDPILWKRLYMEVFEYTRPMMHPEPGKFYQINPEEYEHPNPWKESFQQLYKGAHVKPGFAEHFYSNPARYKGRENMLYYDTIEDALGGVQEAHFDGLIFVHSGIYTDEWIYIESPITMIGAAPGKVADKVIIENTRDSTFVFMEGSEDAYVGYMTIRFNPDDKSAQHHNAHHCLEITVNCSPIIDHCIIRSTCTVGSAVCVSGQGACPTIKHCNISDCENVGLYITDHAQGIYEDNEISNNALAGIWVKNHGNPIIRRNHIHHGRDVGVFTFDHGMGYFESCNIHRNRIAGFEVKAYANPTVVRCEIHHGQTGGIYVHEKGRGQFIENKIYANNFAGVWITSNSDPTIRGNSIFNGNQGGVYIFGDGRGLIEGNDIYGNALAGIQIRTNSCPIVRHNKIHDGQHGGIYVHEKGQGVIEENEVYSNTLAGVWVTTGSTPVLRRNRIHSGKQVGVYFYDNGHGVLEDNDIYNHMYSGVQIRTGSNPKIRRNKIWGGQNGGILVYNSGLGCIEDNEIFDNAMAGVWIKTDSNPTLRRNKIHDGRDGGICIFNGGRGLLEENDIFRNAQAGVLISTNSHPVLRKNRIFDGFAAGIEITNHATATLEGNQIFNNRFGGLFLASGVNVTMKDNKIMNNQDAIEKAVSRGQCLYKISSYTSYPMHDFYRCHTCNTTDRNAICVNCIKKCHQGHDVEFIRHDRFFCDCGAGTLSNPCTLAGEPTHDTDTLYDSAPPIESNTLQHN.

The segment at 1–150 (MNSVRAANRR…RVSGKSQDLS (150 aa)) is disordered. Positions 7–16 (ANRRPRRVSR) are enriched in basic residues. Residues 17–27 (PRPVQQQQQQP) are compositionally biased toward low complexity. A compositionally biased stretch (pro residues) spans 28–73 (PQQPPPQPPQQQPPPQPPQQPPQQQPPPPPQQQPPPPPPPPPPPPQ). Residues 117 to 132 (PTKSSMEGASTSTTEN) show a composition bias toward polar residues. Residues 156-202 (QYLQEKLPDEVVLKIFSYLLEQDLCRAACVCKRFSELANDPILWKRL) enclose the F-box domain. PbH1 repeat units lie at residues 398–420 (GACP…YITD), 421–443 (HAQG…WVKN), 444–466 (HGNP…FTFD), 467–489 (HGMG…EVKA), 490–512 (YANP…YVHE), 513–535 (KGRG…WITS), 536–558 (NSDP…YIFG), 559–581 (DGRG…QIRT), 582–604 (NSCP…YVHE), 605–627 (KGQG…WVTT), 628–650 (GSTP…YFYD), 651–673 (NGHG…QIRT), 674–696 (GSNP…LVYN), 697–719 (SGLG…WIKT), 720–742 (DSNP…CIFN), 743–765 (GGRG…LIST), 766–788 (NSHP…EITN), 789–811 (HATA…FLAS), and 812–833 (GVNV…EKAV). The UBR-type zinc-finger motif lies at 836 to 907 (GQCLYKISSY…LSNPCTLAGE (72 aa)).

In terms of assembly, component of the SCF(FBXO11) complex consisting of CUL1, RBX1, SKP1 and FBXO11. Interacts with CIITA. At 9.5 dpc and 10.5 dpc, expression is restricted to developing heart tissue. By 11.5 dpc and 12.5 dpc, detected in liver and subsequently in muscle by 13.5 dpc. At 14.5 dpc, still detected in heart, liver and muscle and also in the developing secondary palate including the nasal, medial and oral epithelia of the palatal shelves. At 15.5 dpc and 16.5 dpc, expressed in lung, kidney, heart, liver, muscle and adrenal gland. At this time, fusion of the palate shelves has occurred, with expression confined to the nasal and oral epithelia. At 17.5 dpc, expression in the lung is confined to bronchial epithelial cells and is evident in bone marrow, skin, tissue macrophages, osteoblasts, kidney, liver and spleen. At 18.5 dpc, expressed in bone marrow, liver, kidney and muscle but decreases in heart and lung. At this time, first detected in the middle ear epithelium. At the newborn stage, expression is strong in the middle ear where it is confined to mucin-secreting cells, as well as persisting in bone marrow, kidney and liver. Middle ear expression persists in postnatal head tissue at 4 and 13 days after birth and has declined by 21 days after birth. In the adult, expression is seen in alveolar macrophages of the lung, glomeruli and collecting tubules of the kidney, midbrain, heart and muscle.

The protein localises to the nucleus. Its subcellular location is the chromosome. It functions in the pathway protein modification; protein ubiquitination. Substrate recognition component of a SCF (SKP1-CUL1-F-box protein) E3 ubiquitin-protein ligase complex which mediates the ubiquitination and subsequent proteasomal degradation of target proteins, such as DTL/CDT2, BCL6, SNAI1 and PRDM1/BLIMP1. The SCF(FBXO11) complex mediates ubiquitination and degradation of BCL6, thereby playing a role in the germinal center B-cells terminal differentiation toward memory B-cells and plasma cells. The SCF(FBXO11) complex also mediates ubiquitination and degradation of DTL, an important step for the regulation of TGF-beta signaling, cell migration and the timing of the cell-cycle progression and exit. The SCF(FBXO11) complex also catalyzes ubiquitination and degradation of GSK3B-phosphorylated SNAI1. Binds to and neddylates phosphorylated p53/TP53, inhibiting its transcriptional activity. Plays a role in the regulatiom of erythropoiesis but not myelopoiesis or megakaryopoiesis. Mechanistically, activates erythroid genes by mediating the degradation of BAHD1, a heterochromatin-associated protein that recruits corepressors to H3K27me3 marks. Participates in macrophage cell death and inflammation in response to bacterial toxins by regulating the expression of complement 5a receptor 1/C5AR1 and IL-1beta. Acts as a critical regulator to determine the level of MHC-II by mediating the recognition of degron at the P/S/T domain of CIITA leading to its ubiquitination and subsequent degradation via the proteasome. Participates in the antiviral repsonse by initiating the activation of TBK1-IRF3-IFN-I axis. Mediates the 'Lys-63'-linked ubiquitination of TRAF3 to strengthen the interaction between TRAF3 and TBK1. This chain is F-box only protein 11, found in Mus musculus (Mouse).